Reading from the N-terminus, the 351-residue chain is Thiamine-phosphate synthase (351 aa).

The segment at 1-128 (MKNPNIIQPE…SKIASEIRYE (128 aa)) is unknown. The segment at 129–351 (IYTLEIEILN…IIIKELSHEN (223 aa)) is thiamine-phosphate synthase. 4-amino-2-methyl-5-(diphosphooxymethyl)pyrimidine-binding positions include 180–184 (QHRFK) and Asn212. The Mg(2+) site is built by Asn213 and Asp232. Residue Ser251 participates in 4-amino-2-methyl-5-(diphosphooxymethyl)pyrimidine binding. Residue 277–279 (TLT) coordinates 2-[(2R,5Z)-2-carboxy-4-methylthiazol-5(2H)-ylidene]ethyl phosphate. Lys280 is a binding site for 4-amino-2-methyl-5-(diphosphooxymethyl)pyrimidine. 2-[(2R,5Z)-2-carboxy-4-methylthiazol-5(2H)-ylidene]ethyl phosphate-binding positions include Gly307 and 327–328 (VS).

This sequence belongs to the thiamine-phosphate synthase family.

The enzyme catalyses 2-[(2R,5Z)-2-carboxy-4-methylthiazol-5(2H)-ylidene]ethyl phosphate + 4-amino-2-methyl-5-(diphosphooxymethyl)pyrimidine + 2 H(+) = thiamine phosphate + CO2 + diphosphate. It carries out the reaction 2-(2-carboxy-4-methylthiazol-5-yl)ethyl phosphate + 4-amino-2-methyl-5-(diphosphooxymethyl)pyrimidine + 2 H(+) = thiamine phosphate + CO2 + diphosphate. It catalyses the reaction 4-methyl-5-(2-phosphooxyethyl)-thiazole + 4-amino-2-methyl-5-(diphosphooxymethyl)pyrimidine + H(+) = thiamine phosphate + diphosphate. It participates in cofactor biosynthesis; thiamine diphosphate biosynthesis; thiamine phosphate from 4-amino-2-methyl-5-diphosphomethylpyrimidine and 4-methyl-5-(2-phosphoethyl)-thiazole: step 1/1. Its function is as follows. Condenses 4-methyl-5-(beta-hydroxyethyl)thiazole monophosphate (THZ-P) and 2-methyl-4-amino-5-hydroxymethyl pyrimidine pyrophosphate (HMP-PP) to form thiamine monophosphate (TMP). In Prochlorococcus marinus subsp. pastoris (strain CCMP1986 / NIES-2087 / MED4), this protein is Thiamine-phosphate synthase.